Here is a 134-residue protein sequence, read N- to C-terminus: ATP synthase epsilon chain (134 aa).

Belongs to the ATPase epsilon chain family. In terms of assembly, F-type ATPases have 2 components, CF(1) - the catalytic core - and CF(0) - the membrane proton channel. CF(1) has five subunits: alpha(3), beta(3), gamma(1), delta(1), epsilon(1). CF(0) has three main subunits: a, b and c.

The protein resides in the cell membrane. Its function is as follows. Produces ATP from ADP in the presence of a proton gradient across the membrane. This chain is ATP synthase epsilon chain, found in Listeria monocytogenes serotype 4a (strain HCC23).